Reading from the N-terminus, the 346-residue chain is Membrane progestin receptor alpha (346 aa).

The Cytoplasmic segment spans residues 1–72 (MAMAQKLSHL…RTLFQQHNEA (72 aa)). Residues 73 to 93 (VNVWTHLLAALVLLLRLALFV) form a helical membrane-spanning segment. The Extracellular segment spans residues 94 to 103 (ETVDFWGDPH). Residues 104 to 124 (ALPLFIIVLASFTYLSFSALA) form a helical membrane-spanning segment. The Cytoplasmic segment spans residues 125–137 (HLLQAKSEFWHYS). The chain crosses the membrane as a helical span at residues 138–158 (FFFLDYVGVAVYQFGSALAHF). Over 159–169 (YYAIEPAWHAQ) the chain is Extracellular. A helical membrane pass occupies residues 170-190 (VQAVFLPMAAFLAWLSCIGSC). Residues 191–237 (YNKYIQKPGLLGRTCQEVPSVLAYALDISPVVHRIFVSSDPTTDDPA) are Cytoplasmic-facing. The chain crosses the membrane as a helical span at residues 238 to 258 (LLYHKCQVVFFLLAAAFFSTF). Residues 259–276 (MPERWFPGSCHVFGQGHQ) are Extracellular-facing. Residues 277–297 (LFHIFLVLCTLAQLEAVALDY) traverse the membrane as a helical segment. Topologically, residues 298 to 316 (EARRPIYEPLHTHWPHNFS) are cytoplasmic. Residues 317 to 337 (GLFLLTVGSSILTAFLLSQLV) form a helical membrane-spanning segment. Residues 338-346 (QRKLDQKTK) lie on the Extracellular side of the membrane.

The protein belongs to the ADIPOR family. As to expression, expressed in a wide range of tissues including ovary, testis, placenta, uterus and bladder.

It localises to the cell membrane. Its function is as follows. Plasma membrane progesterone (P4) receptor coupled to G proteins. Seems to act through a G(i) mediated pathway. May be involved in oocyte maturation. Involved in neurosteroid inhibition of apoptosis. Also binds dehydroepiandrosterone (DHEA), pregnanolone, pregnenolone and allopregnanolone. This is Membrane progestin receptor alpha from Homo sapiens (Human).